The primary structure comprises 67 residues: DNA-directed RNA polymerases I, II, and III subunit RPABC5 (67 aa).

C7, C10, C44, and C45 together coordinate Zn(2+).

It belongs to the archaeal Rpo10/eukaryotic RPB10 RNA polymerase subunit family. In terms of assembly, component of the RNA polymerase I (Pol I), RNA polymerase II (Pol II) and RNA polymerase III (Pol III) complexes consisting of at least 13, 12 and 17 subunits, respectively.

Its subcellular location is the nucleus. Its function is as follows. DNA-dependent RNA polymerase catalyzes the transcription of DNA into RNA using the four ribonucleoside triphosphates as substrates. Common component of RNA polymerases I, II and III which synthesize ribosomal RNA precursors, mRNA precursors and many functional non-coding RNAs, and a small RNAs, such as 5S rRNA and tRNAs, respectively. Pol II is the central component of the basal RNA polymerase II transcription machinery. Pols are composed of mobile elements that move relative to each other. In Pol II, RBP10 is part of the core element with the central large cleft. The protein is DNA-directed RNA polymerases I, II, and III subunit RPABC5 of Caenorhabditis briggsae.